The chain runs to 270 residues: Aliphatic sulfonates import ATP-binding protein SsuB 3 (270 aa).

In terms of domain architecture, ABC transporter spans Leu17 to Leu238. An ATP-binding site is contributed by Gly49–Ser56.

This sequence belongs to the ABC transporter superfamily. Aliphatic sulfonates importer (TC 3.A.1.17.2) family. In terms of assembly, the complex is composed of two ATP-binding proteins (SsuB), two transmembrane proteins (SsuC) and a solute-binding protein (SsuA).

Its subcellular location is the cell inner membrane. It carries out the reaction ATP + H2O + aliphatic sulfonate-[sulfonate-binding protein]Side 1 = ADP + phosphate + aliphatic sulfonateSide 2 + [sulfonate-binding protein]Side 1.. Part of the ABC transporter complex SsuABC involved in aliphatic sulfonates import. Responsible for energy coupling to the transport system. The protein is Aliphatic sulfonates import ATP-binding protein SsuB 3 of Pseudomonas syringae pv. syringae (strain B728a).